We begin with the raw amino-acid sequence, 294 residues long: Cytidine deaminase (294 aa).

2 CMP/dCMP-type deaminase domains span residues 48–168 and 187–294; these read DDNT…FGPN and ETTD…YYTF. Substrate is bound at residue 89 to 91; it reads NME. Position 102 (His-102) interacts with Zn(2+). The active-site Proton donor is Glu-104. The Zn(2+) site is built by Cys-129 and Cys-132.

Belongs to the cytidine and deoxycytidylate deaminase family. Homodimer. It depends on Zn(2+) as a cofactor.

It catalyses the reaction cytidine + H2O + H(+) = uridine + NH4(+). The catalysed reaction is 2'-deoxycytidine + H2O + H(+) = 2'-deoxyuridine + NH4(+). This enzyme scavenges exogenous and endogenous cytidine and 2'-deoxycytidine for UMP synthesis. In Photorhabdus laumondii subsp. laumondii (strain DSM 15139 / CIP 105565 / TT01) (Photorhabdus luminescens subsp. laumondii), this protein is Cytidine deaminase.